The sequence spans 469 residues: Glutamine synthetase (469 aa).

Residues 14 to 99 (NDVKFVDLRF…FCDILDPVSG (86 aa)) form the GS beta-grasp domain. Residues 106–469 (PRGTAKKAEA…PVEFDMYYSV (364 aa)) form the GS catalytic domain. Glutamate 131 and glutamate 133 together coordinate Mg(2+). Position 209 (glutamate 209) interacts with ATP. Residues glutamate 214 and glutamate 221 each coordinate Mg(2+). L-glutamate-binding positions include 265–266 (NG) and glycine 266. Histidine 270 contacts Mg(2+). Residues 272–274 (HLS) and serine 274 each bind ATP. Arginine 322, glutamate 328, and arginine 340 together coordinate L-glutamate. 3 residues coordinate ATP: arginine 340, arginine 345, and lysine 353. A Mg(2+)-binding site is contributed by glutamate 358. Arginine 360 lines the L-glutamate pocket. O-AMP-tyrosine is present on tyrosine 398.

It belongs to the glutamine synthetase family. Oligomer of 12 subunits arranged in the form of two hexameric ring. The cofactor is Mg(2+).

It is found in the cytoplasm. The catalysed reaction is L-glutamate + NH4(+) + ATP = L-glutamine + ADP + phosphate + H(+). The activity of this enzyme could be controlled by adenylation under conditions of abundant glutamine. Functionally, catalyzes the ATP-dependent biosynthesis of glutamine from glutamate and ammonia. The protein is Glutamine synthetase of Rhizobium meliloti (strain 1021) (Ensifer meliloti).